The primary structure comprises 399 residues: Mitochondrial glycine transporter (399 aa).

3 Solcar repeats span residues 35-137 (IPPY…LRSV), 164-251 (LSTT…CKTN), and 266-374 (GNWM…GRSW). 6 helical membrane-spanning segments follow: residues 41–66 (LAFGALSGFASCVLLQPFDLLKTRLQ), 112–138 (GTAPTVIRNVPGVALYFYSVSHLRSVA), 170–195 (LLTGAVARVTVGFILSPVTVVKARFE), 226–249 (GFTATALRDAPYAGLYLALYEACK), 270–296 (VVSASGLLAGTLATLLTHPFDIIKTRM), and 349–367 (GLGLRCARKAASSAIGWSI). Positions 379–399 (EASSSAQEAGTGTRLLDHKQV) are disordered.

Belongs to the mitochondrial carrier (TC 2.A.29) family. SLC25A38 subfamily.

It localises to the mitochondrion inner membrane. The enzyme catalyses glycine(in) = glycine(out). Its function is as follows. Mitochondrial glycine transporter that imports glycine into the mitochondrial matrix. Plays an important role in providing glycine for the first enzymatic step in heme biosynthesis, the condensation of glycine with succinyl-CoA to produce 5-aminolevulinate (ALA) in the mitochondrial matrix. This is Mitochondrial glycine transporter from Mycosarcoma maydis (Corn smut fungus).